The primary structure comprises 330 residues: Cathepsin K (330 aa).

Positions 1–16 (MWGLEVLLLLPMASFA) are cleaved as a signal peptide. A propeptide spans 17–115 (LYPEEILDTQ…TLYIPDWESR (99 aa)) (activation peptide). The N-linked (GlcNAc...) asparagine glycan is linked to asparagine 104. 3 cysteine pairs are disulfide-bonded: cysteine 137–cysteine 178, cysteine 171–cysteine 211, and cysteine 270–cysteine 319. Residue cysteine 140 is part of the active site. Active-site residues include histidine 277 and asparagine 297.

It belongs to the peptidase C1 family.

It is found in the lysosome. It localises to the secreted. The protein localises to the apical cell membrane. It catalyses the reaction Broad proteolytic activity. With small-molecule substrates and inhibitors, the major determinant of specificity is P2, which is preferably Leu, Met &gt; Phe, and not Arg.. Functionally, thiol protease involved in osteoclastic bone resorption and may participate partially in the disorder of bone remodeling. Displays potent endoprotease activity against fibrinogen at acid pH. May play an important role in extracellular matrix degradation. Involved in the release of thyroid hormone thyroxine (T4) by limited proteolysis of TG/thyroglobulin in the thyroid follicle lumen. The polypeptide is Cathepsin K (CTSK) (Canis lupus familiaris (Dog)).